Consider the following 325-residue polypeptide: MSRCKFRSLNYSEFLNLVEKSDFEEVVTREHEKIMAQKVDGTFNESMKLENRKLNRYLDMLCFDHTRVTLPAEKNRGDYINANYVDGYEYKKKFICTQAPLQQTAYDFWRTVWMHHTRIIVMMCKKKENRKQCFAYWNDIEGGDIVFGKFKITTTQIETHLSYIETTLLVTDGTSAIQEVTHFVFTQWPDYGVPNDVMNLLNFILTVKSAQKDVIRQLAQERFKIGDNPPPIVVHCSAGVGRTGAYCLLDSAISEFDACATISIPSTLINIRNQRYYCIFILPQYFFCYRVMERYVNLTVNKVSKKLIANVATALFNKVLHLKDN.

The Tyrosine-protein phosphatase domain maps to 27–295 (VTREHEKIMA…FFCYRVMERY (269 aa)). Cys-236 acts as the Phosphocysteine intermediate in catalysis.

The protein belongs to the protein-tyrosine phosphatase family.

It is found in the host cytoplasm. The enzyme catalyses O-phospho-L-tyrosyl-[protein] + H2O = L-tyrosyl-[protein] + phosphate. Functionally, suppresses host immune cell adhesion and phagocytosis. Triggers host mitochondrial membrane depolarization and caspase-dependent apoptosis. This chain is Tyrosine phosphatase H2 (H2), found in Microplitis demolitor bracovirus (isolate Webb) (MdBV).